A 426-amino-acid polypeptide reads, in one-letter code: Serine--tRNA ligase (426 aa).

Residues 103–129 (VPNLPDDSVPTGKDENDNPEIRRWGTP) are disordered. Basic and acidic residues predominate over residues 114-125 (GKDENDNPEIRR). 230 to 232 (TAE) is an L-serine binding site. 261–263 (RSE) contacts ATP. E284 is an L-serine binding site. ATP is bound at residue 348-351 (EISS). S384 lines the L-serine pocket.

The protein belongs to the class-II aminoacyl-tRNA synthetase family. Type-1 seryl-tRNA synthetase subfamily. In terms of assembly, homodimer. The tRNA molecule binds across the dimer.

Its subcellular location is the cytoplasm. The catalysed reaction is tRNA(Ser) + L-serine + ATP = L-seryl-tRNA(Ser) + AMP + diphosphate + H(+). It carries out the reaction tRNA(Sec) + L-serine + ATP = L-seryl-tRNA(Sec) + AMP + diphosphate + H(+). Its pathway is aminoacyl-tRNA biosynthesis; selenocysteinyl-tRNA(Sec) biosynthesis; L-seryl-tRNA(Sec) from L-serine and tRNA(Sec): step 1/1. Functionally, catalyzes the attachment of serine to tRNA(Ser). Is also able to aminoacylate tRNA(Sec) with serine, to form the misacylated tRNA L-seryl-tRNA(Sec), which will be further converted into selenocysteinyl-tRNA(Sec). The sequence is that of Serine--tRNA ligase from Dichelobacter nodosus (strain VCS1703A).